Here is a 190-residue protein sequence, read N- to C-terminus: Holliday junction branch migration complex subunit RuvA (190 aa).

Residues 1-64 (MIGRITGTLI…EDAQLLYGFG (64 aa)) are domain I. Residues 65–137 (SSAERSTFRE…MRGKLGADIG (73 aa)) are domain II. Residues 137 to 141 (GATPH) form a flexible linker region. Residues 142 to 190 (AAGGHQSDILNALLALGYSDKESQAALKKLPEGVDVSEGIRLALKALVR) form a domain III region.

This sequence belongs to the RuvA family. In terms of assembly, homotetramer. Forms an RuvA(8)-RuvB(12)-Holliday junction (HJ) complex. HJ DNA is sandwiched between 2 RuvA tetramers; dsDNA enters through RuvA and exits via RuvB. An RuvB hexamer assembles on each DNA strand where it exits the tetramer. Each RuvB hexamer is contacted by two RuvA subunits (via domain III) on 2 adjacent RuvB subunits; this complex drives branch migration. In the full resolvosome a probable DNA-RuvA(4)-RuvB(12)-RuvC(2) complex forms which resolves the HJ.

It is found in the cytoplasm. Functionally, the RuvA-RuvB-RuvC complex processes Holliday junction (HJ) DNA during genetic recombination and DNA repair, while the RuvA-RuvB complex plays an important role in the rescue of blocked DNA replication forks via replication fork reversal (RFR). RuvA specifically binds to HJ cruciform DNA, conferring on it an open structure. The RuvB hexamer acts as an ATP-dependent pump, pulling dsDNA into and through the RuvAB complex. HJ branch migration allows RuvC to scan DNA until it finds its consensus sequence, where it cleaves and resolves the cruciform DNA. The polypeptide is Holliday junction branch migration complex subunit RuvA (Bordetella parapertussis (strain 12822 / ATCC BAA-587 / NCTC 13253)).